The following is a 597-amino-acid chain: Elongation factor 4 (597 aa).

One can recognise a tr-type G domain in the interval 2–184; the sequence is KNIRNFSIIA…TVVQKIPAPK (183 aa). GTP is bound by residues 14-19 and 131-134; these read DHGKST and NKID.

It belongs to the TRAFAC class translation factor GTPase superfamily. Classic translation factor GTPase family. LepA subfamily.

The protein resides in the cell inner membrane. It catalyses the reaction GTP + H2O = GDP + phosphate + H(+). Required for accurate and efficient protein synthesis under certain stress conditions. May act as a fidelity factor of the translation reaction, by catalyzing a one-codon backward translocation of tRNAs on improperly translocated ribosomes. Back-translocation proceeds from a post-translocation (POST) complex to a pre-translocation (PRE) complex, thus giving elongation factor G a second chance to translocate the tRNAs correctly. Binds to ribosomes in a GTP-dependent manner. This is Elongation factor 4 from Laribacter hongkongensis (strain HLHK9).